Consider the following 130-residue polypeptide: Small ribosomal subunit protein uS8 (130 aa).

The protein belongs to the universal ribosomal protein uS8 family. Part of the 30S ribosomal subunit. Contacts proteins S5 and S12.

Functionally, one of the primary rRNA binding proteins, it binds directly to 16S rRNA central domain where it helps coordinate assembly of the platform of the 30S subunit. The protein is Small ribosomal subunit protein uS8 of Yersinia pseudotuberculosis serotype O:1b (strain IP 31758).